Consider the following 186-residue polypeptide: ADP-ribosylation factor-like protein 8B-A (186 aa).

The segment at residues 1-19 (MLALINRLLDWFKSLFWKE) is an intramembrane region (note=Mediates targeting to membranes). Residues 29–35 (QYSGKTT), 71–75 (DIGGQ), and 130–133 (NKRD) contribute to the GTP site.

This sequence belongs to the small GTPase superfamily. Arf family.

It localises to the late endosome membrane. The protein resides in the lysosome membrane. Its subcellular location is the cytoplasm. The protein localises to the cytoskeleton. It is found in the spindle. It localises to the early endosome membrane. In terms of biological role, small GTPase which cycles between active GTP-bound and inactive GDP-bound states. In its active state, binds to a variety of effector proteins playing a key role in the regulation of lysosomal positioning which is important for nutrient sensing, natural killer cell-mediated cytotoxicity and antigen presentation. Along with its effectors, orchestrates lysosomal transport and fusion. The protein is ADP-ribosylation factor-like protein 8B-A (arl8ba) of Danio rerio (Zebrafish).